The following is a 296-amino-acid chain: Probable lipid kinase YegS-like (296 aa).

The region spanning 1 to 130 (MPHTLLILNG…IDLAQVNDKH (130 aa)) is the DAGKc domain. ATP contacts are provided by residues T37, 63-69 (GDGTINE), and T92. Positions 212, 215, and 217 each coordinate Mg(2+). The active-site Proton acceptor is the E268.

The protein belongs to the diacylglycerol/lipid kinase family. YegS lipid kinase subfamily. It depends on Mg(2+) as a cofactor. Ca(2+) serves as cofactor.

It is found in the cytoplasm. Probably phosphorylates lipids; the in vivo substrate is unknown. The chain is Probable lipid kinase YegS-like from Yersinia enterocolitica serotype O:8 / biotype 1B (strain NCTC 13174 / 8081).